The following is a 57-amino-acid chain: High-potential iron-sulfur protein (57 aa).

The [4Fe-4S] cluster site is built by Cys21, Cys24, Cys33, and Cys46.

This sequence belongs to the high-potential iron-sulfur protein (HiPIP) family. As to quaternary structure, homodimer.

In terms of biological role, specific class of high-redox-potential 4Fe-4S ferredoxins. Functions in anaerobic electron transport in most purple and in some other photosynthetic bacteria and in at least one genus (Paracoccus) of halophilic, denitrifying bacteria. This chain is High-potential iron-sulfur protein (hip), found in Rhodopila globiformis (Rhodopseudomonas globiformis).